Consider the following 414-residue polypeptide: 2,3-diketo-5-methylthiopentyl-1-phosphate enolase (414 aa).

K99 serves as the catalytic Proton acceptor. Substrate is bound by residues K148, 174 to 177, H265, G338, and 360 to 361; these read KDDE and GG. 3 residues coordinate Mg(2+): K174, D176, and E177. K174 is subject to N6-carboxylysine.

The protein belongs to the RuBisCO large chain family. Type IV subfamily. In terms of assembly, homodimer. Mg(2+) serves as cofactor.

It carries out the reaction 5-methylsulfanyl-2,3-dioxopentyl phosphate = 2-hydroxy-5-methylsulfanyl-3-oxopent-1-enyl phosphate. The protein operates within amino-acid biosynthesis; L-methionine biosynthesis via salvage pathway; L-methionine from S-methyl-5-thio-alpha-D-ribose 1-phosphate: step 3/6. Catalyzes the enolization of 2,3-diketo-5-methylthiopentyl-1-phosphate (DK-MTP-1-P) into 2-hydroxy-3-keto-5-methylthiopentenyl-1-phosphate (HK-MTPenyl-1-P). This is 2,3-diketo-5-methylthiopentyl-1-phosphate enolase from Bacillus anthracis (strain CDC 684 / NRRL 3495).